Here is a 499-residue protein sequence, read N- to C-terminus: Cysteine--tRNA ligase (499 aa).

Cysteine 29 lines the Zn(2+) pocket. The 'HIGH' region signature appears at 31 to 41; sequence VTVYDLCHLGH. Zn(2+)-binding residues include cysteine 213, histidine 238, and glutamate 242. The short motif at 270–274 is the 'KMSKS' region element; the sequence is KMSKS. Residue lysine 273 participates in ATP binding.

It belongs to the class-I aminoacyl-tRNA synthetase family. Monomer. The cofactor is Zn(2+).

It is found in the cytoplasm. The enzyme catalyses tRNA(Cys) + L-cysteine + ATP = L-cysteinyl-tRNA(Cys) + AMP + diphosphate. The polypeptide is Cysteine--tRNA ligase (Synechococcus sp. (strain CC9902)).